A 376-amino-acid chain; its full sequence is UPF0754 membrane protein SSP0953 (376 aa).

2 helical membrane passes run 4–24 (FLVI…TNVI) and 356–376 (FLGF…AIFV).

This sequence belongs to the UPF0754 family.

The protein localises to the cell membrane. The polypeptide is UPF0754 membrane protein SSP0953 (Staphylococcus saprophyticus subsp. saprophyticus (strain ATCC 15305 / DSM 20229 / NCIMB 8711 / NCTC 7292 / S-41)).